The following is a 263-amino-acid chain: Thymidylate kinase (263 aa).

A mitochondrion-targeting transit peptide spans 1-51; the sequence is MKRICSVSSVQLFSRSFRALASPRSLNYPLQCIKRSSVRMESSNFSSGVRT. An ATP-binding site is contributed by 66-74; that stretch reads GLDRSGKST.

It belongs to the thymidylate kinase family. In terms of tissue distribution, expressed in root, rosette leaves, flower buds, flowers and siliques.

The protein localises to the mitochondrion. It localises to the cytoplasm. It is found in the nucleus. Its subcellular location is the nucleoplasm. It catalyses the reaction dTMP + ATP = dTDP + ADP. Its pathway is pyrimidine metabolism; dTTP biosynthesis. Catalyzes the conversion of dTMP to dTDP. Involved in the regulation of DNA replication. Is essential to promote the first division of the zygote. In Arabidopsis thaliana (Mouse-ear cress), this protein is Thymidylate kinase.